The chain runs to 258 residues: UPF0328 protein ECU02_0090 (258 aa).

This sequence belongs to the UPF0328 family.

The polypeptide is UPF0328 protein ECU02_0090 (Encephalitozoon cuniculi (strain GB-M1) (Microsporidian parasite)).